A 158-amino-acid chain; its full sequence is Copper transporter 2 (158 aa).

The interval 1 to 20 (MDHDHMHDMPPPSPSSSSMS) is disordered. 2 helical membrane passes run 53-73 (GMYALCLIVIFLLAVIAEWLA) and 104-124 (YLVMLAVMSFNAGVFIVAIAG).

It belongs to the copper transporter (Ctr) (TC 1.A.56) family. SLC31A subfamily. As to expression, highly expressed in leaves and at lower levels in roots, stems and flowers.

It is found in the membrane. Functionally, involved in the transport of copper. The chain is Copper transporter 2 (COPT2) from Arabidopsis thaliana (Mouse-ear cress).